We begin with the raw amino-acid sequence, 120 residues long: Large ribosomal subunit protein bL19 (120 aa).

It belongs to the bacterial ribosomal protein bL19 family.

This protein is located at the 30S-50S ribosomal subunit interface and may play a role in the structure and function of the aminoacyl-tRNA binding site. This Cyanothece sp. (strain PCC 7425 / ATCC 29141) protein is Large ribosomal subunit protein bL19.